A 623-amino-acid polypeptide reads, in one-letter code: Sulfite reductase [NADPH] flavoprotein alpha-component (623 aa).

The tract at residues 1–32 (MSFQKNEYSHKNVSEDNNGQGGNPPIASPLND) is disordered. The Flavodoxin-like domain occupies 87–225 (LTIIFASQTG…AAEEWRKNAL (139 aa)). FMN contacts are provided by residues 93 to 98 (SQTGNA), 140 to 143 (STNG), and 176 to 185 (LGDSSYEFFC). One can recognise an FAD-binding FR-type domain in the interval 258–472 (QNPYTATLLT…VEHNNNFKLP (215 aa)). FAD contacts are provided by residues T346, A380, 410 to 413 (RLYS), 428 to 430 (TVG), Y434, and 443 to 446 (GGAS). NADP(+) is bound by residues 543 to 544 (SR), 549 to 553 (KVYVQ), and D585. Y623 serves as a coordination point for FAD.

The protein belongs to the NADPH-dependent sulphite reductase flavoprotein subunit CysJ family. It in the N-terminal section; belongs to the flavodoxin family. In the C-terminal section; belongs to the flavoprotein pyridine nucleotide cytochrome reductase family. In terms of assembly, alpha(8)-beta(8). The alpha component is a flavoprotein, the beta component is a hemoprotein. It depends on FAD as a cofactor. FMN is required as a cofactor.

The enzyme catalyses hydrogen sulfide + 3 NADP(+) + 3 H2O = sulfite + 3 NADPH + 4 H(+). The protein operates within sulfur metabolism; hydrogen sulfide biosynthesis; hydrogen sulfide from sulfite (NADPH route): step 1/1. In terms of biological role, component of the sulfite reductase complex that catalyzes the 6-electron reduction of sulfite to sulfide. This is one of several activities required for the biosynthesis of L-cysteine from sulfate. The flavoprotein component catalyzes the electron flow from NADPH -&gt; FAD -&gt; FMN to the hemoprotein component. The sequence is that of Sulfite reductase [NADPH] flavoprotein alpha-component from Vibrio parahaemolyticus serotype O3:K6 (strain RIMD 2210633).